A 273-amino-acid chain; its full sequence is MSILEKITSSPSECAEHITNKDSCLSKKIQKELTSFLQKKETLGCDSESCVITHPAVKAYAQQKGLDLSKELETRFKAPGPRNNTGLLTNFNIDETLQRWAIKYTKFFNCPFSMMDFERIHYKFNQVDMVKVYKGEELQYVEGKAVKRPCNTFGCVLNTDFSTGTGKHWVAIFVDMRGDCWSIEYFNSAGNSPPGPVIRWMERVKQQLLKIHHTVKTLAVTNIRHQRSQTECGPYSLFYIRARLDNVSYTHFISTRITDEEMYKFRTHLFRIA.

Catalysis depends on residues histidine 168 and asparagine 187. Glutamine 226 serves as a coordination point for substrate. Catalysis depends on cysteine 232, which acts as the Nucleophile.

It belongs to the peptidase C63 family.

Its subcellular location is the host cytoplasm. It is found in the virion. Its function is as follows. Cysteine protease that plays several role during infection including processing of the structural polyprotein or inhibition of the host immune response. Catalyzes the maturation of the pp220 and pp62 polyprotein precursors into core-shell proteins. Plays a role in the disruption of host pyroptosis via specific cleavage of gasdermin D/GSDMD. In addition, strongly decreases the host cGAS-STING signaling by targeting IKBKE via its enzymatic activity. Also impairs host FOXJ1-mediated antiviral effect via degradation of FOXJ1. This chain is SUMO-1 cysteine protease S273R, found in Ornithodoros (relapsing fever ticks).